The following is a 91-amino-acid chain: Small ribosomal subunit protein bS16 (91 aa).

This sequence belongs to the bacterial ribosomal protein bS16 family.

In Ligilactobacillus salivarius (strain UCC118) (Lactobacillus salivarius), this protein is Small ribosomal subunit protein bS16.